The primary structure comprises 166 residues: MNKEQKKNYISEMETQFQNNEAVMVTHYQGLTMSQLDELRAQMREHGIKFTITKNRITKIALEKTKCKELSNLFTGATAVAFSNDAIISARILSKFAKTNESLKLLGGIMGNEVLDQAAVQNVANLPTLDEARANLVGILATPASKLVSILLARSEKMSSLSPENS.

It belongs to the universal ribosomal protein uL10 family. As to quaternary structure, part of the ribosomal stalk of the 50S ribosomal subunit. The N-terminus interacts with L11 and the large rRNA to form the base of the stalk. The C-terminus forms an elongated spine to which L12 dimers bind in a sequential fashion forming a multimeric L10(L12)X complex.

In terms of biological role, forms part of the ribosomal stalk, playing a central role in the interaction of the ribosome with GTP-bound translation factors. This Pelagibacter ubique (strain HTCC1062) protein is Large ribosomal subunit protein uL10.